A 429-amino-acid polypeptide reads, in one-letter code: Probable M18 family aminopeptidase 2 (429 aa).

His-82, His-156, and His-401 together coordinate Zn(2+).

This sequence belongs to the peptidase M18 family. Requires Zn(2+) as cofactor.

This Pseudomonas syringae pv. syringae (strain B728a) protein is Probable M18 family aminopeptidase 2.